A 197-amino-acid chain; its full sequence is Phosphoheptose isomerase (197 aa).

In terms of domain architecture, SIS spans methionine 37 to methionine 197. Asparagine 52–glycine 54 is a substrate binding site. Residues histidine 61 and glutamate 65 each contribute to the Zn(2+) site. Substrate contacts are provided by residues glutamate 65, asparagine 94 to aspartate 95, serine 120 to serine 122, serine 125, and glutamine 175. Zn(2+) contacts are provided by glutamine 175 and histidine 183.

Belongs to the SIS family. GmhA subfamily. In terms of assembly, homotetramer. Requires Zn(2+) as cofactor.

Its subcellular location is the cytoplasm. The enzyme catalyses 2 D-sedoheptulose 7-phosphate = D-glycero-alpha-D-manno-heptose 7-phosphate + D-glycero-beta-D-manno-heptose 7-phosphate. The protein operates within carbohydrate biosynthesis; D-glycero-D-manno-heptose 7-phosphate biosynthesis; D-glycero-alpha-D-manno-heptose 7-phosphate and D-glycero-beta-D-manno-heptose 7-phosphate from sedoheptulose 7-phosphate: step 1/1. Its function is as follows. Catalyzes the isomerization of sedoheptulose 7-phosphate in D-glycero-D-manno-heptose 7-phosphate. This Neisseria meningitidis serogroup C / serotype 2a (strain ATCC 700532 / DSM 15464 / FAM18) protein is Phosphoheptose isomerase.